Here is a 490-residue protein sequence, read N- to C-terminus: V-type proton ATPase subunit B (490 aa).

Arg380 contributes to the ATP binding site.

It belongs to the ATPase alpha/beta chains family. As to quaternary structure, V-ATPase is a heteromultimeric enzyme made up of two complexes: the ATP-hydrolytic V1 complex and the proton translocation V0 complex. The V1 complex consists of three catalytic AB heterodimers that form a heterohexamer, three peripheral stalks each consisting of EG heterodimers, one central rotor including subunits D and F, and the regulatory subunits C and H. The proton translocation complex V0 consists of the proton transport subunit a, a ring of proteolipid subunits c9c'', rotary subunit d, subunits e and f, and the accessory subunits VhaAC45 and ATP6AP2. Expressed in Malpighian tubules, rectum, antennal palps and oviduct.

Functionally, non-catalytic subunit of the V1 complex of vacuolar(H+)-ATPase (V-ATPase), a multisubunit enzyme composed of a peripheral complex (V1) that hydrolyzes ATP and a membrane integral complex (V0) that translocates protons. V-ATPase is responsible for acidifying and maintaining the pH of intracellular compartments and in some cell types, is targeted to the plasma membrane, where it is responsible for acidifying the extracellular environment. Essential for the proper assembly and activity of V-ATPase. This is V-type proton ATPase subunit B (Vha55) from Drosophila melanogaster (Fruit fly).